A 510-amino-acid polypeptide reads, in one-letter code: Light-independent protochlorophyllide reductase subunit B (510 aa).

Aspartate 36 provides a ligand contact to [4Fe-4S] cluster. Catalysis depends on aspartate 296, which acts as the Proton donor. A substrate-binding site is contributed by 431–432; it reads GM.

It belongs to the ChlB/BchB/BchZ family. In terms of assembly, protochlorophyllide reductase is composed of three subunits; ChlL, ChlN and ChlB. Forms a heterotetramer of two ChlB and two ChlN subunits. [4Fe-4S] cluster is required as a cofactor.

It carries out the reaction chlorophyllide a + oxidized 2[4Fe-4S]-[ferredoxin] + 2 ADP + 2 phosphate = protochlorophyllide a + reduced 2[4Fe-4S]-[ferredoxin] + 2 ATP + 2 H2O. It participates in porphyrin-containing compound metabolism; chlorophyll biosynthesis (light-independent). Its function is as follows. Component of the dark-operative protochlorophyllide reductase (DPOR) that uses Mg-ATP and reduced ferredoxin to reduce ring D of protochlorophyllide (Pchlide) to form chlorophyllide a (Chlide). This reaction is light-independent. The NB-protein (ChlN-ChlB) is the catalytic component of the complex. The sequence is that of Light-independent protochlorophyllide reductase subunit B from Synechococcus sp. (strain JA-2-3B'a(2-13)) (Cyanobacteria bacterium Yellowstone B-Prime).